Consider the following 395-residue polypeptide: S-adenosylmethionine synthase (395 aa).

ATP is bound at residue histidine 12. Position 14 (aspartate 14) interacts with Mg(2+). Glutamate 40 contributes to the K(+) binding site. Positions 53 and 96 each coordinate L-methionine. Positions 96-106 (QSKEIADAVNF) are flexible loop. ATP-binding positions include 174–176 (DGK), 242–243 (RF), aspartate 251, 257–258 (RK), alanine 274, and lysine 278. Residue aspartate 251 participates in L-methionine binding. Residue lysine 282 coordinates L-methionine.

Belongs to the AdoMet synthase family. In terms of assembly, homotetramer; dimer of dimers. Mg(2+) serves as cofactor. It depends on K(+) as a cofactor.

The protein resides in the cytoplasm. It carries out the reaction L-methionine + ATP + H2O = S-adenosyl-L-methionine + phosphate + diphosphate. It participates in amino-acid biosynthesis; S-adenosyl-L-methionine biosynthesis; S-adenosyl-L-methionine from L-methionine: step 1/1. Functionally, catalyzes the formation of S-adenosylmethionine (AdoMet) from methionine and ATP. The overall synthetic reaction is composed of two sequential steps, AdoMet formation and the subsequent tripolyphosphate hydrolysis which occurs prior to release of AdoMet from the enzyme. This Tropheryma whipplei (strain TW08/27) (Whipple's bacillus) protein is S-adenosylmethionine synthase.